Reading from the N-terminus, the 1077-residue chain is Receptor-like protein 1 (1077 aa).

The N-terminal stretch at 1 to 38 (MRTDERRRWWVKPKKHITLVFITITMIIQFQMKGCVSC) is a signal peptide. The tract at residues 39–120 (VETERMGLLQ…SQTRSLNLSL (82 aa)) is N-cap. Residues 39–1024 (VETERMGLLQ…NEEEGNVIDM (986 aa)) lie on the Extracellular side of the membrane. 3 N-linked (GlcNAc...) asparagine glycosylation sites follow: Asn-117, Asn-131, and Asn-139. LRR repeat units follow at residues 124-147 (FPQLQSLNLSWNWFTNLSDHFLGF), 153-176 (LDKLTTLDFSHNMFDNSIVPFLNA), 177-201 (ATSIRSLHLESNYMEGVFPPQELSN), 202-225 (MTNLRVLNLKDNSFSFLSSQGLTD), 227-250 (RDLEVLDLSFNGVNDSEASHSLST), 251-274 (AKLKTLDLNFNPLSDFSQLKGLES), 275-299 (LQELQVLKLRGNKFNHTLSTHVLKD), 300-324 (LKMLQELDLSDNGFTNLDHGRGLEI), 326-348 (TSLQVLDFKRNQLSLTHEGYLGI), 351-376 (LMKLRELDLSSNALTSLPYCLGNLTH), 378-397 (RTLDLSNNQLNGNLSSFVSG), and 399-424 (PSVLEYLSLLDNNFDGSFLFNSLVNQ). N-linked (GlcNAc...) asparagine glycosylation occurs at Asn-201. A glycan (N-linked (GlcNAc...) asparagine) is linked at Asn-240. Asn-289 is a glycosylation site (N-linked (GlcNAc...) asparagine). N-linked (GlcNAc...) asparagine glycosylation is found at Asn-373, Asn-390, and Asn-423. Residues 425 to 449 (TRLTVFKLSSKVGVIQVQTESSWAP) form an LRR 13; degenerate repeat. LRR repeat units follow at residues 450–473 (LFQLKMLYLSNCSLGSTMLGFLVH), 474–498 (QRDLCFVDLSHNKLTGTFPTWLVKN), 499–522 (NTRLQTILLSGNSLTKLQLPILVH), 524–545 (LQVLDISSNMIYDSIQEDIGMV), 546–570 (FPNLRFMNFSSNHFQGTIPSSIGEM), 572–594 (SLQVLDMSSNGLYGQLPIMFLSG), 595–621 (CYSLRVLKLSNNQLQGKIFSKHANLTG), 623–643 (VGLFLDGNNFTGSLEEGLLKS), 644–666 (KNLTLLDISDNRFSGMLPLWIGR), 667–694 (ISRLSYLYMSGNQLKGPFPFLRQSPWVE), 696–713 (MDISHNSFSGSIPRNVNF), 714–737 (PSLRELRLQNNEFTGLVPGNLFKA), 739–761 (GLEVLDLRNNNFSGKILNTIDQT), 762–785 (SKLRILLLRNNSFQTYIPGKICQL), 786–808 (SEVGLLDLSHNQFRGPIPSCFSK), 877–901 (LRYMHGLDLSSNELSGEIPIEIGDL), 902–925 (QNIRSLNLSSNRLTGSIPDSISKL), 927–949 (GLESLDLSNNKLDGSIPPALADL), and 951–970 (SLGYLNISYNNLSGEIPFKG). Asn-460 and Asn-498 each carry an N-linked (GlcNAc...) asparagine glycan. Asn-553 carries an N-linked (GlcNAc...) asparagine glycan. Asn-618, Asn-631, and Asn-645 each carry an N-linked (GlcNAc...) asparagine glycan. 2 N-linked (GlcNAc...) asparagine glycosylation sites follow: Asn-749 and Asn-771. A glycan (N-linked (GlcNAc...) asparagine) is linked at Asn-908. Asn-956 and Asn-961 each carry an N-linked (GlcNAc...) asparagine glycan. A C-cap/acidic domain region spans residues 971-1024 (HLVTFDERSYIGNAHLCGLPTNKNCISQRVPEPPSVSTHAKEEENEEEGNVIDM). The chain crosses the membrane as a helical span at residues 1025 to 1045 (VWFYWTCAAVYISTSLALFAF). Residues 1046–1077 (LYIDSRWSREWFYRVDLCVHHILQFKRSSVCN) lie on the Cytoplasmic side of the membrane.

The protein belongs to the RLP family.

Its subcellular location is the cell membrane. Functionally, involved in plant defense. Confers resistance to the bacterial pathogen Xanthomonas through recognition of the microbe-associated molecular pattern (MAMP) eMax. Functionality seems to depend on the presence of the receptor kinase SOBIR1 as an adapter protein. In Arabidopsis thaliana (Mouse-ear cress), this protein is Receptor-like protein 1.